We begin with the raw amino-acid sequence, 446 residues long: WD repeat domain phosphoinositide-interacting protein 1 (446 aa).

7 WD repeats span residues 3 to 42, 47 to 88, 92 to 126, 131 to 173, 177 to 216, 222 to 261, and 304 to 343; these read AEAA…LFSL, QLDQ…VYHF, TEIC…IHNI, LLKT…LYDG, KTVC…VFSV, LYEF…IFKL, and FATA…MYNL. A Nuclear receptor interaction motif is present at residues 131 to 136; sequence LLKTLL. A L/FRRG motif motif is present at residues 225–228; sequence FRRG. The tract at residues 386–406 is disordered; it reads ARPSASSASTVPGYSEDGGAL.

It belongs to the WD repeat PROPPIN family. As to quaternary structure, interacts with androgen receptor (AR) and the estrogen receptors ESR1 and ESR2. Interacts with WIPI2. Interacts with WDR45. Interacts with ATG16L1. May interact with NUDC. As to expression, ubiquitously expressed. Highly expressed in skeletal muscle, heart, testis, pancreas and placenta. Highly expressed in G361, Sk-mel-28, Sk-mel-13, WM852 and WM451 cells. Up-regulated in a variety of tumor tissues.

The protein resides in the golgi apparatus. It localises to the trans-Golgi network. Its subcellular location is the endosome. It is found in the cytoplasmic vesicle. The protein localises to the clathrin-coated vesicle. The protein resides in the preautophagosomal structure membrane. It localises to the cytoplasm. Its subcellular location is the cytoskeleton. Its function is as follows. Component of the autophagy machinery that controls the major intracellular degradation process by which cytoplasmic materials are packaged into autophagosomes and delivered to lysosomes for degradation. Plays an important role in starvation- and calcium-mediated autophagy, as well as in mitophagy. Functions downstream of the ULK1 and PI3-kinases that produce phosphatidylinositol 3-phosphate (PtdIns3P) on membranes of the endoplasmic reticulum once activated. Binds phosphatidylinositol 3-phosphate (PtdIns3P), and maybe other phosphoinositides including PtdIns3,5P2 and PtdIns5P, and is recruited to phagophore assembly sites at the endoplasmic reticulum membranes. There, it assists WIPI2 in the recruitment of ATG12-ATG5-ATG16L1, a complex that directly controls the elongation of the nascent autophagosomal membrane. Together with WDR45/WIPI4, promotes ATG2 (ATG2A or ATG2B)-mediated lipid transfer by enhancing ATG2-association with phosphatidylinositol 3-monophosphate (PI3P)-containing membranes. Involved in xenophagy of Staphylococcus aureus. Invading S.aureus cells become entrapped in autophagosome-like WIPI1 positive vesicles targeted for lysosomal degradation. Also plays a distinct role in controlling the transcription of melanogenic enzymes and melanosome maturation, a process that is distinct from starvation-induced autophagy. May also regulate the trafficking of proteins involved in the mannose-6-phosphate receptor (MPR) recycling pathway. The polypeptide is WD repeat domain phosphoinositide-interacting protein 1 (WIPI1) (Homo sapiens (Human)).